Here is a 123-residue protein sequence, read N- to C-terminus: Large ribosomal subunit protein uL14 (123 aa).

It belongs to the universal ribosomal protein uL14 family. In terms of assembly, part of the 50S ribosomal subunit. Forms a cluster with proteins L3 and L19. In the 70S ribosome, L14 and L19 interact and together make contacts with the 16S rRNA in bridges B5 and B8.

Its function is as follows. Binds to 23S rRNA. Forms part of two intersubunit bridges in the 70S ribosome. The polypeptide is Large ribosomal subunit protein uL14 (Hamiltonella defensa subsp. Acyrthosiphon pisum (strain 5AT)).